Consider the following 440-residue polypeptide: Ribosomal protein uS12 methylthiotransferase RimO (440 aa).

In terms of domain architecture, MTTase N-terminal spans 1–117; the sequence is MKVHLTSLGC…VIEAVAGKES (117 aa). Positions 10, 46, 80, 155, 159, and 162 each coordinate [4Fe-4S] cluster. The 231-residue stretch at 141-371 folds into the Radical SAM core domain; the sequence is CATPHTVYVK…MTAQIDISSR (231 aa). The 67-residue stretch at 374 to 440 folds into the TRAM domain; sequence AKRVGSREPV…SAYDLTGEAQ (67 aa).

The protein belongs to the methylthiotransferase family. RimO subfamily. [4Fe-4S] cluster serves as cofactor.

It localises to the cytoplasm. The enzyme catalyses L-aspartate(89)-[ribosomal protein uS12]-hydrogen + (sulfur carrier)-SH + AH2 + 2 S-adenosyl-L-methionine = 3-methylsulfanyl-L-aspartate(89)-[ribosomal protein uS12]-hydrogen + (sulfur carrier)-H + 5'-deoxyadenosine + L-methionine + A + S-adenosyl-L-homocysteine + 2 H(+). Catalyzes the methylthiolation of an aspartic acid residue of ribosomal protein uS12. The sequence is that of Ribosomal protein uS12 methylthiotransferase RimO from Desulfosudis oleivorans (strain DSM 6200 / JCM 39069 / Hxd3) (Desulfococcus oleovorans).